The chain runs to 226 residues: Probable transcriptional regulatory protein y4xI (226 aa).

In terms of domain architecture, Response regulatory spans 1-114 (MRTLLVDTDL…ELIARMRALL (114 aa)). Residues 122 to 220 (CPIIEFGNLH…VRGIGYTLEL (99 aa)) constitute a DNA-binding region (ompR/PhoB-type).

The protein resides in the cytoplasm. The polypeptide is Probable transcriptional regulatory protein y4xI (Sinorhizobium fredii (strain NBRC 101917 / NGR234)).